The sequence spans 682 residues: Serine/threonine-protein kinase PLK2 (682 aa).

The segment at A25–S67 is disordered. A compositionally biased stretch (polar residues) spans Q36 to V48. In terms of domain architecture, Protein kinase spans Y79 to F331. ATP is bound by residues L85–C93 and K108. The active-site Proton acceptor is D202. T236 is subject to Phosphothreonine. A disordered region spans residues T402 to S430. 2 POLO box domains span residues W500–E578 and Y598–N682.

The protein belongs to the protein kinase superfamily. Ser/Thr protein kinase family. CDC5/Polo subfamily. As to quaternary structure, interacts with CIB1. Interacts with NSF; causing NSF dissociation from GRIA2. In terms of processing, catalytic activity is enhanced by phosphorylation of Thr-236.

The protein localises to the cytoplasm. It localises to the cytoskeleton. The protein resides in the microtubule organizing center. Its subcellular location is the centrosome. It is found in the centriole. The protein localises to the cell projection. It localises to the dendrite. It carries out the reaction L-seryl-[protein] + ATP = O-phospho-L-seryl-[protein] + ADP + H(+). The catalysed reaction is L-threonyl-[protein] + ATP = O-phospho-L-threonyl-[protein] + ADP + H(+). Activated by phosphorylation of Thr-236. Once activated, activity is stimulated by binding target proteins. Its function is as follows. Tumor suppressor serine/threonine-protein kinase involved in synaptic plasticity, centriole duplication and G1/S phase transition. Polo-like kinases act by binding and phosphorylating proteins that are already phosphorylated on a specific motif recognized by the POLO box domains. Phosphorylates CPAP, NPM1, RAPGEF2, RASGRF1, SNCA, SIPA1L1 and SYNGAP1. Plays a key role in synaptic plasticity and memory by regulating the Ras and Rap protein signaling: required for overactivity-dependent spine remodeling by phosphorylating the Ras activator RASGRF1 and the Rap inhibitor SIPA1L1 leading to their degradation by the proteasome. Conversely, phosphorylates the Rap activator RAPGEF2 and the Ras inhibitor SYNGAP1, promoting their activity. Also regulates synaptic plasticity independently of kinase activity, via its interaction with NSF that disrupts the interaction between NSF and the GRIA2 subunit of AMPARs, leading to a rapid rundown of AMPAR-mediated current that occludes long term depression. Required for procentriole formation and centriole duplication by phosphorylating CPAP and NPM1, respectively. Its induction by p53/TP53 suggests that it may participate in the mitotic checkpoint following stress. The sequence is that of Serine/threonine-protein kinase PLK2 (Plk2) from Rattus norvegicus (Rat).